Consider the following 207-residue polypeptide: Guanylate kinase (207 aa).

A Guanylate kinase-like domain is found at 5-184; the sequence is GNLFIVSAPS…ALADLRAIIR (180 aa). An ATP-binding site is contributed by 12–19; the sequence is APSGAGKS.

It belongs to the guanylate kinase family.

The protein localises to the cytoplasm. It catalyses the reaction GMP + ATP = GDP + ADP. In terms of biological role, essential for recycling GMP and indirectly, cGMP. The chain is Guanylate kinase from Shewanella oneidensis (strain ATCC 700550 / JCM 31522 / CIP 106686 / LMG 19005 / NCIMB 14063 / MR-1).